Reading from the N-terminus, the 421-residue chain is D-amino-acid oxidase (421 aa).

A12, G13, A14, V15, G47, G64, I65, K225, A226, R359, G385, G388, and L389 together coordinate FAD. R359 contacts D-proline. Residue R359 coordinates D-serine.

This sequence belongs to the DAMOX/DASOX family. Requires FAD as cofactor.

The protein localises to the cytoplasm. The protein resides in the secreted. It localises to the cell wall. The enzyme catalyses a D-alpha-amino acid + O2 + H2O = a 2-oxocarboxylate + H2O2 + NH4(+). Functionally, catalyzes the oxidative deamination of D-amino acids with broad substrate specificity. This Bradyrhizobium diazoefficiens (strain JCM 10833 / BCRC 13528 / IAM 13628 / NBRC 14792 / USDA 110) protein is D-amino-acid oxidase.